The sequence spans 574 residues: Pescadillo homolog (574 aa).

Residues 289 to 312 form a disordered region; it reads PSEPNDDTEVDEFPADPENAGLEE. The span at 292-303 shows a compositional bias: acidic residues; that stretch reads PNDDTEVDEFPA. The region spanning 323–416 is the BRCT domain; sequence KHKSLFVGLK…LLLPVEDYFP (94 aa). The disordered stretch occupies residues 452–486; it reads LGLDEEDDDDDDDDEEEDDDDDEEEEDKKLRQLEN. Residues 453–477 are compositionally biased toward acidic residues; it reads GLDEEDDDDDDDDEEEDDDDDEEEE.

The protein belongs to the pescadillo family. Component of the PeBoW complex, composed of bop1, pes1 and wdr12. The complex is held together by bop1, which interacts with pes1 via its N-terminal domain and with wdr12 via a high-affinity interaction between the seven-bladed beta-propeller domains of the 2 proteins. The PeBoW complex associates with the 66S pre-ribosome.

It localises to the nucleus. The protein localises to the nucleolus. Its subcellular location is the nucleoplasm. Component of the PeBoW complex, which is required for maturation of 28S and 5.8S ribosomal RNAs and formation of the 60S ribosome. Required for neural crest migration and eye development. This Xenopus laevis (African clawed frog) protein is Pescadillo homolog (pes1).